Here is a 378-residue protein sequence, read N- to C-terminus: Spermidine/putrescine import ATP-binding protein PotA (378 aa).

The ABC transporter domain maps to 18–248; that stretch reads VQLAGIRKCF…PKNLFVTGFI (231 aa). 50 to 57 contributes to the ATP binding site; that stretch reads GPSGCGKT.

The protein belongs to the ABC transporter superfamily. Spermidine/putrescine importer (TC 3.A.1.11.1) family. The complex is composed of two ATP-binding proteins (PotA), two transmembrane proteins (PotB and PotC) and a solute-binding protein (PotD).

Its subcellular location is the cell inner membrane. The catalysed reaction is ATP + H2O + polyamine-[polyamine-binding protein]Side 1 = ADP + phosphate + polyamineSide 2 + [polyamine-binding protein]Side 1.. In terms of biological role, part of the ABC transporter complex PotABCD involved in spermidine/putrescine import. Responsible for energy coupling to the transport system. In Shigella flexneri serotype 5b (strain 8401), this protein is Spermidine/putrescine import ATP-binding protein PotA.